A 493-amino-acid chain; its full sequence is Protein LTV1 homolog (493 aa).

Disordered stretches follow at residues 42-63 (AAAR…QRQE), 97-119 (PNQA…KLML), and 170-207 (IQAM…DENE). A compositionally biased stretch (acidic residues) spans 176-207 (GDSDDEEWDDEDGEEQSDMDFDSDDLNEDENE). Ser-345, Ser-369, Ser-370, Ser-424, and Ser-427 each carry phosphoserine. Residues 359–387 (VIDEPRRSRRSSASTNPAPIQIDPKTGLP) form a disordered region. The stretch at 437-468 (KDETHEEKKERKRLLKDYRNERRIEKKANTEA) forms a coiled coil. Residues 465–474 (NTEAFKEEKK) are compositionally biased toward basic and acidic residues. Residues 465 to 493 (NTEAFKEEKKRQTHVKINQRTNQQGASIV) are disordered. Over residues 479 to 493 (VKINQRTNQQGASIV) the composition is skewed to polar residues.

It belongs to the LTV1 family. In terms of assembly, interacts with RpS3; the interaction is RNA-independent. Associates with free 40S ribosome subunits.

It localises to the cytoplasm. Necessary for the biogenesis of 40S ribosome subunits by regulating pre-rRNA processing. Non-ribosomal factor required for efficient nuclear export of the ribosomal 40S subunit. Necessary for endoreplication driven by Myc. In Drosophila melanogaster (Fruit fly), this protein is Protein LTV1 homolog.